The primary structure comprises 640 residues: Choline O-acetyltransferase (640 aa).

A Phosphoserine modification is found at serine 17. Histidine 334 (proton acceptor) is an active-site residue. A Phosphoserine modification is found at serine 365. Residues 412–424 (GKTF…YSPD), serine 450, and glutamine 551 contribute to the CoA site. A disordered region spans residues 614–640 (CSSRQPADSKPPAPKEKARGPSQAKQS).

This sequence belongs to the carnitine/choline acetyltransferase family. As to quaternary structure, monomer.

It catalyses the reaction choline + acetyl-CoA = acetylcholine + CoA. Catalyzes the reversible synthesis of acetylcholine (ACh) from acetyl CoA and choline at cholinergic synapses. The polypeptide is Choline O-acetyltransferase (Chat) (Rattus norvegicus (Rat)).